The chain runs to 808 residues: Probable inorganic carbon transporter subunit DabA (808 aa).

Cys-334, Asp-336, His-494, and Cys-509 together coordinate Zn(2+).

This sequence belongs to the inorganic carbon transporter (TC 9.A.2) DabA family. As to quaternary structure, forms a complex with DabB. It depends on Zn(2+) as a cofactor.

Its subcellular location is the cell inner membrane. Its function is as follows. Part of an energy-coupled inorganic carbon pump. In Rhodopseudomonas palustris (strain BisB5), this protein is Probable inorganic carbon transporter subunit DabA.